We begin with the raw amino-acid sequence, 371 residues long: Probable diguanylate cyclase DgcC (371 aa).

Transmembrane regions (helical) follow at residues 46 to 66 (AVGLAGMFLPIASTLVSHPPP), 68 to 88 (WWWLVLVGWAFVWPHLAWQIA), 112 to 132 (WVGVMGVNVLPSTAMLMIMCL), 143 to 163 (FVAGLVLMVVSCLVTLELTGI), and 171 to 191 (PLEWWLSLPIIVIYPLLFGWV). The region spanning 240 to 371 (RDATLLIIDI…AGRNRTEVAA (132 aa)) is the GGDEF domain. Mg(2+) contacts are provided by aspartate 248 and isoleucine 249. Positions 256 and 265 each coordinate substrate. Aspartate 291 serves as a coordination point for Mg(2+).

Mg(2+) serves as cofactor.

It localises to the cell inner membrane. The enzyme catalyses 2 GTP = 3',3'-c-di-GMP + 2 diphosphate. The protein operates within purine metabolism; 3',5'-cyclic di-GMP biosynthesis. A probable diguanylate cyclase. The last member of a cascade of expressed proteins, its expression requires DgcM. DgcC production induces biosynthesis of cellulose in some E.coli isolates, but not in K12 strains. Cyclic-di-GMP is a second messenger which controls cell surface-associated traits in bacteria. The protein is Probable diguanylate cyclase DgcC of Escherichia coli (strain K12).